A 415-amino-acid polypeptide reads, in one-letter code: Levansucrase LscA (415 aa).

Positions 45, 46, 132, 202, and 203 each coordinate sucrose. Asp46 functions as the Nucleophile in the catalytic mechanism. Residue Glu287 is the Proton donor/acceptor of the active site.

The protein belongs to the glycosyl hydrolase 68 family.

Its subcellular location is the periplasm. It carries out the reaction [6)-beta-D-fructofuranosyl-(2-&gt;](n) alpha-D-glucopyranoside + sucrose = [6)-beta-D-fructofuranosyl-(2-&gt;](n+1) alpha-D-glucopyranoside + D-glucose. In terms of biological role, catalyzes the synthesis of levan, a fructose polymer, by transferring the fructosyl moiety from sucrose to a growing acceptor molecule. LscA encodes a functional enzyme in vitro, when expressed in E.coli under control of the vector-based lactose promoter (Plac), and it can restore levan production to the lscB-lscC double mutant. However, lscA is not expressed in P.savastanoi pv. glycinea PG4180 under standard conditions. It could be an ancestral Lsc variant in P.syringae. This Pseudomonas savastanoi pv. glycinea (Pseudomonas syringae pv. glycinea) protein is Levansucrase LscA.